The sequence spans 257 residues: Short chain dehydrogenase helC (257 aa).

The N-terminal stretch at 1-22 is a signal peptide; sequence MNTAIITGAAQGVGLCIAEALA. Val-13 provides a ligand contact to NADP(+). The N-linked (GlcNAc...) asparagine glycan is linked to Asn-46. NADP(+) is bound by residues Asp-60 and Asn-87. N-linked (GlcNAc...) asparagine glycosylation is present at Asn-110. Positions 154, 158, 185, and 187 each coordinate NADP(+). Tyr-154 acts as the Proton acceptor in catalysis. Lys-158 functions as the Lowers pKa of active site Tyr in the catalytic mechanism.

Belongs to the short-chain dehydrogenases/reductases (SDR) family.

It participates in mycotoxin biosynthesis. In terms of biological role, short chain dehydrogenase; part of the gene cluster that mediates the biosynthesis of helvolic acid, an antibacterial nortriterpenoid. Protostadienol synthase helA cyclizes (3S)-oxidosqualene to (17Z)-protosta-17(20),24-dien-3-beta-ol (protostadienol). The synthesis of protostadienol is followed by several steps of monooxygenation, dehydrogenation, and acyl transfer to yield the final helvolic acid. Following the cyclization to the tetracyclic protostadienol by helA, cytochrome P450 monooxygenases helB1-mediated and helB2-mediated oxidation at C-4 and C-16, acyltransferase helD2-dependent acetylation of 16-OH, oxidation of C-21 by cytochrome P450 monooxygenase helB4, and short chain dehydrogenase helC-dependent oxidative decarboxylation yield the fusidane skeleton. This intermediate is further modified in three additional steps mediated by the cytochrome P450 monooxygenase helB3, the acyltransferase helD1, and the 3-ketosteroid 1-dehydrogenase helE to give helvolic acid. Compared with the late stages in the biosynthesis of helvolic acid, enzymes involved in the early stage modifications act in a relatively strict order. The hydroxylation of C-16 by helB1 and subsequent acetylation by helD2 should occur before the helB3-mediated oxidation of C-21. C-4 demethylation in fusidane-type antibiotics proceeds in an unusual manner though it is also achieved by oxidative decarboxylation. The methyl group at C-4 beta position is oxidized by helB1 and subsequently removed by the short chain dehydrogenase helC. This Aspergillus fumigatus (strain ATCC MYA-4609 / CBS 101355 / FGSC A1100 / Af293) (Neosartorya fumigata) protein is Short chain dehydrogenase helC.